A 492-amino-acid chain; its full sequence is N-succinylglutamate 5-semialdehyde dehydrogenase (492 aa).

220-225 (GSASTG) contributes to the NAD(+) binding site. Residues E243 and C277 contribute to the active site.

The protein belongs to the aldehyde dehydrogenase family. AstD subfamily.

The enzyme catalyses N-succinyl-L-glutamate 5-semialdehyde + NAD(+) + H2O = N-succinyl-L-glutamate + NADH + 2 H(+). It functions in the pathway amino-acid degradation; L-arginine degradation via AST pathway; L-glutamate and succinate from L-arginine: step 4/5. Catalyzes the NAD-dependent reduction of succinylglutamate semialdehyde into succinylglutamate. This Salmonella paratyphi A (strain AKU_12601) protein is N-succinylglutamate 5-semialdehyde dehydrogenase.